The following is a 50-amino-acid chain: Penaeidin-1 (50 aa).

Intrachain disulfides connect C25/C38, C27/C45, and C39/C46.

Higher expression in hemocytes and to a lesser extent in heart, testis, gills, intestine, lymphoid organ and hepatopancreas. Traces in eyes and subcuticular epithelium. Not present in the brain.

Its subcellular location is the cytoplasmic granule. Functionally, antibacterial activity against M.luteus and E.coli bacteria. Antifungal activity against N.crassa and F.oxysporum. Presents chitin-binding activity. This is Penaeidin-1 from Penaeus vannamei (Whiteleg shrimp).